The following is a 146-amino-acid chain: Hemoglobin subunit beta (146 aa).

Val-1 carries the post-translational modification N-acetylvaline. Residues 2 to 146 enclose the Globin domain; the sequence is HLTPEEKALV…VANALAHKYH (145 aa). The residue at position 59 (Lys-59) is an N6-acetyllysine. His-63 contacts heme b. At Lys-82 the chain carries N6-acetyllysine. Residue His-92 participates in heme b binding. An S-nitrosocysteine modification is found at Cys-93. An N6-acetyllysine modification is found at Lys-144.

This sequence belongs to the globin family. As to quaternary structure, heterotetramer of two alpha chains and two beta chains. In terms of tissue distribution, red blood cells.

In terms of biological role, involved in oxygen transport from the lung to the various peripheral tissues. This chain is Hemoglobin subunit beta (HBB), found in Trichechus inunguis (Amazon manatee).